The sequence spans 429 residues: MKLYNLKNHNEQVNFETAVKLGLGQKQGLFFPVKLPIMTPVELSKILKMDFITRSTEILSKFISSEISKEVLHEHVKKAFSFSKPLKICINKNISCFELFHGPTLAFKDFGARFMAQMILCLNKKNESFTILTATSGDTGAAVAHAFYGMKNIRVIILYPKGKITLLQEQLFCTLGKNIKTISINGSFDDCQKLVKKAFDDKKLKESIGLNSANSINISRLLAQICYYFEAFSLISEEKRKNLVIAVPCGNFGNLTAGLLAKSLGLPIQSFIACTNSNDTVPRFLNSGKWNPKKTVSTISNAMDISCPNNWPRIEELFRRKKWDLKELRFGSVSDNVTKETLKELFRMGYVSEPHAAIAYRLLHDQLKKEEFGLFLGTAHPSKFKDTVEKILENSISLPKELKNRNNLPLLSHNINPDFNKLKEFLLEK.

N6-(pyridoxal phosphate)lysine is present on K108.

This sequence belongs to the threonine synthase family. Pyridoxal 5'-phosphate is required as a cofactor.

The enzyme catalyses O-phospho-L-homoserine + H2O = L-threonine + phosphate. It functions in the pathway amino-acid biosynthesis; L-threonine biosynthesis; L-threonine from L-aspartate: step 5/5. Functionally, catalyzes the gamma-elimination of phosphate from L-phosphohomoserine and the beta-addition of water to produce L-threonine. This is Threonine synthase (thrC) from Buchnera aphidicola subsp. Schizaphis graminum (strain Sg).